A 256-amino-acid polypeptide reads, in one-letter code: 5-oxoprolinase subunit A 3 (256 aa).

Belongs to the LamB/PxpA family. In terms of assembly, forms a complex composed of PxpA, PxpB and PxpC.

It carries out the reaction 5-oxo-L-proline + ATP + 2 H2O = L-glutamate + ADP + phosphate + H(+). In terms of biological role, catalyzes the cleavage of 5-oxoproline to form L-glutamate coupled to the hydrolysis of ATP to ADP and inorganic phosphate. This is 5-oxoprolinase subunit A 3 from Pseudomonas syringae pv. tomato (strain ATCC BAA-871 / DC3000).